The chain runs to 284 residues: uncharacterized protein (284 aa).

An N-terminal signal peptide occupies residues 1–21 (MKTTMLMLVLLVCSYIHYVCA). 3 helical membrane passes run 88–108 (AGPFAISQVFGPAGRLYFLWA), 144–164 (ALGVYPYVPTLTGFSTFLGVW), and 212–232 (VFTTFAGPPIATSTVFASPTY).

The protein resides in the membrane. This is an uncharacterized protein from Schizosaccharomyces pombe (strain 972 / ATCC 24843) (Fission yeast).